Consider the following 288-residue polypeptide: Acetyl-coenzyme A carboxylase carboxyl transferase subunit beta (288 aa).

Positions 34–288 constitute a CoA carboxyltransferase N-terminal domain; sequence LFAKCPACKH…HLVAFHGGVS (255 aa). Positions 38, 41, 56, and 59 each coordinate Zn(2+). The segment at 38–59 adopts a C4-type zinc-finger fold; the sequence is CPACKHMIYQKDLGPAKICPTC.

The protein belongs to the AccD/PCCB family. In terms of assembly, acetyl-CoA carboxylase is a heterohexamer composed of biotin carboxyl carrier protein (AccB), biotin carboxylase (AccC) and two subunits each of ACCase subunit alpha (AccA) and ACCase subunit beta (AccD). It depends on Zn(2+) as a cofactor.

It localises to the cytoplasm. The catalysed reaction is N(6)-carboxybiotinyl-L-lysyl-[protein] + acetyl-CoA = N(6)-biotinyl-L-lysyl-[protein] + malonyl-CoA. Its pathway is lipid metabolism; malonyl-CoA biosynthesis; malonyl-CoA from acetyl-CoA: step 1/1. Functionally, component of the acetyl coenzyme A carboxylase (ACC) complex. Biotin carboxylase (BC) catalyzes the carboxylation of biotin on its carrier protein (BCCP) and then the CO(2) group is transferred by the transcarboxylase to acetyl-CoA to form malonyl-CoA. This chain is Acetyl-coenzyme A carboxylase carboxyl transferase subunit beta, found in Streptococcus equi subsp. zooepidemicus (strain H70).